The following is a 420-amino-acid chain: Tryptophan synthase beta chain (420 aa).

Lysine 100 carries the N6-(pyridoxal phosphate)lysine modification.

It belongs to the TrpB family. As to quaternary structure, tetramer of two alpha and two beta chains. The cofactor is pyridoxal 5'-phosphate.

It carries out the reaction (1S,2R)-1-C-(indol-3-yl)glycerol 3-phosphate + L-serine = D-glyceraldehyde 3-phosphate + L-tryptophan + H2O. It functions in the pathway amino-acid biosynthesis; L-tryptophan biosynthesis; L-tryptophan from chorismate: step 5/5. The beta subunit is responsible for the synthesis of L-tryptophan from indole and L-serine. This chain is Tryptophan synthase beta chain, found in Pyrobaculum islandicum (strain DSM 4184 / JCM 9189 / GEO3).